The chain runs to 141 residues: UPF0310 protein Mflv_0785 (141 aa).

Belongs to the UPF0310 family.

In Mycolicibacterium gilvum (strain PYR-GCK) (Mycobacterium gilvum (strain PYR-GCK)), this protein is UPF0310 protein Mflv_0785.